The chain runs to 1846 residues: Brefeldin A-inhibited guanine nucleotide-exchange protein 1 (1846 aa).

The DCB; DCB:DCB domain and DCB:HUS domain interaction stretch occupies residues 2–224; it reads YEGKKTKNMF…QEAKQMERER (223 aa). Ser-52 is modified (phosphoserine). Disordered regions lie at residues 216 to 249, 264 to 304, and 347 to 410; these read EAKQMERERHRQQQHLLQSPVSHHEPESPHLRYL, DLEP…ATAA, and ISAS…SPGA. Over residues 264–277 the composition is skewed to basic and acidic residues; sequence DLEPQTHDVDKSLQ. Phosphoserine occurs at positions 286, 289, and 290. Polar residues-rich tracts occupy residues 348-357 and 391-406; these read SASTEGNTGT and SVSSNDTQESGNSSGP. Phosphoserine occurs at positions 394 and 407. Residues 554–574 are HUS; DCB:HUS domain interaction; sequence ADAQSVVDIYVNYDCDLNAAN. The disordered stretch occupies residues 631–684; sequence PNSQTTLGQEKPSEQEISEVKHPETINRYGSLNSLESTSSSGIGSYSTQMSGTD. Basic and acidic residues predominate over residues 641-655; sequence KPSEQEISEVKHPET. Residues 661–681 show a composition bias toward low complexity; it reads SLNSLESTSSSGIGSYSTQMS. The SEC7 domain maps to 688–877; the sequence is QFEVLKQQKE…SAIYNEIAGK (190 aa). The Nuclear localization signal (NLS) signature appears at 708–712; sequence KKPKR. 3 positions are modified to phosphoserine: Ser-1076, Ser-1563, and Ser-1566.

In terms of assembly, homodimer. Interacts with ARFGEF2/BIG2; both proteins are probably part of the same or very similar macromolecular complexes. Interacts with FKBP2. Interacts with MYO9B. Interacts with PRKAR1A and PRKAR2A. Interacts with PPP1CC. Interacts with NCL, FBL, NUP62 and U3 small nucleolar RNA. Interacts with DPY30. Interacts with PDE3A. Interacts with KANK1. Interacts with TBC1D22A and TBC1D22B. Phosphorylated. In vitro phosphorylated by PKA reducing its GEF activity and dephosphorylated by phosphatase PP1.

It localises to the cytoplasm. Its subcellular location is the perinuclear region. The protein resides in the golgi apparatus. The protein localises to the trans-Golgi network. It is found in the nucleus. It localises to the nucleolus. Its subcellular location is the nucleus matrix. The protein resides in the membrane. Its activity is regulated as follows. Inhibited by brefeldin A. Functionally, promotes guanine-nucleotide exchange on ARF1 and ARF3. Promotes the activation of ARF1/ARF3 through replacement of GDP with GTP. Involved in vesicular trafficking. Required for the maintenance of Golgi structure; the function may be independent of its GEF activity. Required for the maturation of integrin beta-1 in the Golgi. Involved in the establishment and persistence of cell polarity during directed cell movement in wound healing. Proposed to act as A kinase-anchoring protein (AKAP) and may mediate crosstalk between Arf and PKA pathways. Inhibits GAP activity of MYO9B probably through competitive RhoA binding. The function in the nucleus remains to be determined. The polypeptide is Brefeldin A-inhibited guanine nucleotide-exchange protein 1 (Arfgef1) (Mus musculus (Mouse)).